We begin with the raw amino-acid sequence, 374 residues long: Speckle-type POZ protein A (374 aa).

An MATH domain is found at 31–161 (KFSYMWTINN…DDKLTLFCEV (131 aa)). A required for nuclear localization region spans residues 71 to 191 (VNPKGLDEES…PECRLADELG (121 aa)). Positions 173 to 297 (QNTMNMVKVP…MCEEALCSNL (125 aa)) constitute a BTB domain. The segment at 297 to 355 (LSVENAAEILILADLHSADQLKTQAVDFINYHASDVMETSGWKSMVVSHPHLVAEAYRS) is homodimerization.

The protein belongs to the Tdpoz family. As to quaternary structure, homodimer. Part of cullin-RING-based BCR (BTB-CUL3-RBX1) E3 ubiquitin-protein ligase complexes that contain CUL3 and SPOP, plus a target protein.

It localises to the nucleus. Its subcellular location is the nucleus speckle. It participates in protein modification; protein ubiquitination. Component of a cullin-RING-based BCR (BTB-CUL3-RBX1) E3 ubiquitin-protein ligase complex that mediates the ubiquitination of target proteins, leading most often to their proteasomal degradation. This is Speckle-type POZ protein A (spop-a) from Xenopus laevis (African clawed frog).